The sequence spans 45 residues: U1-ctenitoxin-Pk1a (45 aa).

4 disulfide bridges follow: cysteine 3–cysteine 16, cysteine 10–cysteine 25, cysteine 15–cysteine 34, and cysteine 27–cysteine 32.

Expressed by the venom gland.

It localises to the secreted. Functionally, neurotoxin. Causes rapid general flaccid paralysis and death in mice at dose levels of 5 ug per mouse. This Phoneutria keyserlingi (Brazilian wandering spider) protein is U1-ctenitoxin-Pk1a.